The sequence spans 564 residues: MTDISTGVQLKPGIGDGTVYNGNMSKDTLVNCSPDPENPEKGQASSPRTQISVDDNEESTTEYPSSWKLAMIMISLCLAVFCLALDTTIMATAIPKIADQFNSLNDVGWYGSAYLLTTSALTLSFGKLYSFYSIKWVYLQALGMFEIGSLICGATPNSLGLIIGRAIAGSGSAGIYSGSMLIVARSAPLERRPLLTGILGGLFGVASVVGPLIGGAFTDNLSWRWCFYINLPLGAVTGLFLILFFDGAKATTQRATIRDQLSQLDLLGSLCFLPAIICVLLALQWGGTTYPWHDGRIIALFTVFGVLLLAFAGVQWWRQEKATVPPRLIANRNVWGAALFSFCLNASFIIFTYYLPMWFQSIKGVTATQSGIMNLPMVLAVVIFSIISGGLVGALGYYTPFMVIAPLIAAIGAGLLSTLRMDSNNASWIGYQILYGVGVGCGLQQPIVAVQGSLAPADLPTGTVIVMFMQTIGGAIFMSVGQNVFQNQLMRNLATQAPSVDAARVLQAGATMLRKTVSSDLLPAALRAYNSAITEAFYVAVAMAVLALPGALVMQWISVKGRQL.

N-linked (GlcNAc...) asparagine glycosylation occurs at Asn23. The tract at residues 26-59 (KDTLVNCSPDPENPEKGQASSPRTQISVDDNEES) is disordered. Polar residues predominate over residues 43 to 53 (QASSPRTQISV). 4 helical membrane passes run 69 to 89 (LAMIMISLCLAVFCLALDTTI), 106 to 126 (DVGWYGSAYLLTTSALTLSFG), 143 to 163 (GMFEIGSLICGATPNSLGLII), and 197 to 217 (GILGGLFGVASVVGPLIGGAF). Asn220 carries an N-linked (GlcNAc...) asparagine glycan. Helical transmembrane passes span 225–245 (WCFYINLPLGAVTGLFLILFF), 266–286 (LLGSLCFLPAIICVLLALQWG), 297–317 (IIALFTVFGVLLLAFAGVQWW), 339–359 (LFSFCLNASFIIFTYYLPMWF), 375–395 (LPMVLAVVIFSIISGGLVGAL), and 396–416 (GYYTPFMVIAPLIAAIGAGLL). N-linked (GlcNAc...) asparagine glycosylation is present at Asn425. 2 helical membrane-spanning segments follow: residues 461-481 (TGTVIVMFMQTIGGAIFMSVG) and 537-557 (FYVAVAMAVLALPGALVMQWI).

It belongs to the major facilitator superfamily. TCR/Tet family.

It is found in the membrane. Functionally, MFS-type transporter; part of the gene cluster that mediates the biosynthesis of astellolides, drimane-type sesquiterpene esters that show antimicrobial, anti-inflammatory, and anti-tumor activities. Seems not to be involved in astellolides translocation. The chain is MFS-type transporter astH from Aspergillus oryzae (strain ATCC 42149 / RIB 40) (Yellow koji mold).